Consider the following 89-residue polypeptide: Small ribosomal subunit protein uS15 (89 aa).

Belongs to the universal ribosomal protein uS15 family. As to quaternary structure, part of the 30S ribosomal subunit. Forms a bridge to the 50S subunit in the 70S ribosome, contacting the 23S rRNA.

One of the primary rRNA binding proteins, it binds directly to 16S rRNA where it helps nucleate assembly of the platform of the 30S subunit by binding and bridging several RNA helices of the 16S rRNA. In terms of biological role, forms an intersubunit bridge (bridge B4) with the 23S rRNA of the 50S subunit in the ribosome. This Saccharophagus degradans (strain 2-40 / ATCC 43961 / DSM 17024) protein is Small ribosomal subunit protein uS15.